The sequence spans 231 residues: tRNA (guanine-N(1)-)-methyltransferase (231 aa).

Residues G112 and 132-137 (LGDFVL) each bind S-adenosyl-L-methionine.

The protein belongs to the RNA methyltransferase TrmD family. As to quaternary structure, homodimer.

Its subcellular location is the cytoplasm. It carries out the reaction guanosine(37) in tRNA + S-adenosyl-L-methionine = N(1)-methylguanosine(37) in tRNA + S-adenosyl-L-homocysteine + H(+). Specifically methylates guanosine-37 in various tRNAs. This is tRNA (guanine-N(1)-)-methyltransferase from Gloeothece citriformis (strain PCC 7424) (Cyanothece sp. (strain PCC 7424)).